A 427-amino-acid polypeptide reads, in one-letter code: Enolase (427 aa).

Glutamine 163 contacts (2R)-2-phosphoglycerate. Glutamate 205 functions as the Proton donor in the catalytic mechanism. The Mg(2+) site is built by aspartate 242, glutamate 285, and aspartate 312. Residues lysine 337, arginine 366, serine 367, and lysine 388 each contribute to the (2R)-2-phosphoglycerate site. Lysine 337 serves as the catalytic Proton acceptor.

The protein belongs to the enolase family. It depends on Mg(2+) as a cofactor.

It is found in the cytoplasm. Its subcellular location is the secreted. The protein localises to the cell surface. It carries out the reaction (2R)-2-phosphoglycerate = phosphoenolpyruvate + H2O. The protein operates within carbohydrate degradation; glycolysis; pyruvate from D-glyceraldehyde 3-phosphate: step 4/5. Functionally, catalyzes the reversible conversion of 2-phosphoglycerate (2-PG) into phosphoenolpyruvate (PEP). It is essential for the degradation of carbohydrates via glycolysis. The polypeptide is Enolase (Burkholderia multivorans (strain ATCC 17616 / 249)).